The primary structure comprises 488 residues: GTPase Der (488 aa).

EngA-type G domains lie at 3-166 (PVVA…AEAM) and 199-372 (IKLA…DSAT). Residues 9 to 16 (GRPNVGKS), 56 to 60 (DTGGI), 118 to 121 (NKVD), 205 to 212 (GKPNVGKS), 252 to 256 (DTAGV), and 317 to 320 (NKWD) contribute to the GTP site. The KH-like domain occupies 373–457 (RRVSTSMLTR…PIQLRFQEGD (85 aa)). The segment at 460-488 (FENKTEKLTMSQERRRKRAQSHIKDRKTK) is disordered. Residues 473–488 (RRRKRAQSHIKDRKTK) show a composition bias toward basic residues.

It belongs to the TRAFAC class TrmE-Era-EngA-EngB-Septin-like GTPase superfamily. EngA (Der) GTPase family. In terms of assembly, associates with the 50S ribosomal subunit.

Its function is as follows. GTPase that plays an essential role in the late steps of ribosome biogenesis. The chain is GTPase Der from Shewanella baltica (strain OS223).